Consider the following 144-residue polypeptide: Large ribosomal subunit protein uL16 (144 aa).

Basic residues predominate over residues 1–19; that stretch reads MLLPKRVKYRRQHRPKTTG. The tract at residues 1–23 is disordered; it reads MLLPKRVKYRRQHRPKTTGRSKG.

It belongs to the universal ribosomal protein uL16 family. Part of the 50S ribosomal subunit.

Its function is as follows. Binds 23S rRNA and is also seen to make contacts with the A and possibly P site tRNAs. This Staphylococcus haemolyticus (strain JCSC1435) protein is Large ribosomal subunit protein uL16.